A 283-amino-acid polypeptide reads, in one-letter code: Elongation factor Ts (283 aa).

The segment at 80–83 (TDFV) is involved in Mg(2+) ion dislocation from EF-Tu.

The protein belongs to the EF-Ts family.

The protein resides in the cytoplasm. Associates with the EF-Tu.GDP complex and induces the exchange of GDP to GTP. It remains bound to the aminoacyl-tRNA.EF-Tu.GTP complex up to the GTP hydrolysis stage on the ribosome. The sequence is that of Elongation factor Ts from Actinobacillus succinogenes (strain ATCC 55618 / DSM 22257 / CCUG 43843 / 130Z).